The sequence spans 213 residues: uncharacterized protein (213 aa).

Gly53, Glu74, and Asp97 together coordinate S-adenosyl-L-methionine.

Belongs to the methyltransferase superfamily. YrrT family.

Functionally, could be a S-adenosyl-L-methionine-dependent methyltransferase. This is an uncharacterized protein from Bacillus velezensis (strain DSM 23117 / BGSC 10A6 / LMG 26770 / FZB42) (Bacillus amyloliquefaciens subsp. plantarum).